A 1405-amino-acid polypeptide reads, in one-letter code: DNA-directed RNA polymerase subunit beta' (1405 aa).

Positions 70, 72, 85, and 88 each coordinate Zn(2+). Mg(2+)-binding residues include D460, D462, and D464. C814, C888, C895, and C898 together coordinate Zn(2+).

The protein belongs to the RNA polymerase beta' chain family. As to quaternary structure, the RNAP catalytic core consists of 2 alpha, 1 beta, 1 beta' and 1 omega subunit. When a sigma factor is associated with the core the holoenzyme is formed, which can initiate transcription. The cofactor is Mg(2+). Requires Zn(2+) as cofactor.

It carries out the reaction RNA(n) + a ribonucleoside 5'-triphosphate = RNA(n+1) + diphosphate. Functionally, DNA-dependent RNA polymerase catalyzes the transcription of DNA into RNA using the four ribonucleoside triphosphates as substrates. The chain is DNA-directed RNA polymerase subunit beta' from Shewanella putrefaciens (strain CN-32 / ATCC BAA-453).